Here is a 174-residue protein sequence, read N- to C-terminus: MPGRFREDFIDALRSKIGEKSMGVYGVDYPATTDFPTAMAGIYDAGTHVEQTAANCPQSKLVLGGFSQGAAVMGFVTAAAIPDGAPLDAPRPMPPEVADHVAAVTLFGMPSVAFMHSIGAPPIVIGPLYAEKTIQLCAPGDPVCSSGGNWAAHNGYADDGMVEQAAVFAAGRLG.

Residue S67 is the Nucleophile of the active site. Cysteines 137 and 144 form a disulfide. Residue D141 is part of the active site. Residue H153 is the Proton donor/acceptor of the active site.

This sequence belongs to the cutinase family.

Does not exhibit cutinase activity. This Mycobacterium tuberculosis (strain ATCC 25618 / H37Rv) protein is Probable carboxylesterase Culp5.